The following is a 50-amino-acid chain: Sperm protamine P1 (50 aa).

The protein belongs to the protamine P1 family. As to quaternary structure, cross-linked by interchain disulfide bonds around the DNA-helix. Testis.

It localises to the nucleus. The protein localises to the chromosome. In terms of biological role, protamines substitute for histones in the chromatin of sperm during the haploid phase of spermatogenesis. They compact sperm DNA into a highly condensed, stable and inactive complex. This Saguinus imperator (Emperor tamarin) protein is Sperm protamine P1 (PRM1).